We begin with the raw amino-acid sequence, 411 residues long: L-cysteine:1D-myo-inositol 2-amino-2-deoxy-alpha-D-glucopyranoside ligase (411 aa).

Residue Cys-43 coordinates Zn(2+). L-cysteinyl-5'-AMP-binding positions include 43–46, Thr-58, and 81–83; these read CGIT and NVT. The short motif at 45-55 is the 'HIGH' region element; the sequence is ITPYDATHLGH. Residues 186-191 carry the 'ERGGDP' region motif; it reads QRGGDP. Residue Trp-226 participates in L-cysteinyl-5'-AMP binding. Zn(2+) is bound at residue Cys-230. 248–250 contributes to the L-cysteinyl-5'-AMP binding site; it reads GSD. His-255 contacts Zn(2+). Ile-282 is an L-cysteinyl-5'-AMP binding site. Residues 288–292 carry the 'KMSKS' region motif; that stretch reads KMSKS.

Belongs to the class-I aminoacyl-tRNA synthetase family. MshC subfamily. Monomer. Zn(2+) serves as cofactor.

The catalysed reaction is 1D-myo-inositol 2-amino-2-deoxy-alpha-D-glucopyranoside + L-cysteine + ATP = 1D-myo-inositol 2-(L-cysteinylamino)-2-deoxy-alpha-D-glucopyranoside + AMP + diphosphate + H(+). In terms of biological role, catalyzes the ATP-dependent condensation of GlcN-Ins and L-cysteine to form L-Cys-GlcN-Ins. This chain is L-cysteine:1D-myo-inositol 2-amino-2-deoxy-alpha-D-glucopyranoside ligase, found in Mycobacterium marinum (strain ATCC BAA-535 / M).